Consider the following 1034-residue polypeptide: Protein ITPRID1 (1034 aa).

Disordered stretches follow at residues 223–290 (KTQQ…PTKP), 442–486 (QVSS…KSMT), and 624–678 (QSSL…SSWS). Composition is skewed to polar residues over residues 443 to 453 (VSSMTGSQSPT) and 465 to 476 (HSPASQQDSLQE). A compositionally biased stretch (low complexity) spans 477 to 486 (SYGSKSKSMT). Positions 669–678 (TDSNAASSWS) are enriched in polar residues. Positions 843–902 (EMETMKMVCQSFREHLEEIEQHFMGQQALYPRDMSEEEREEAEYLRTLREALRQQVAELA) form a coiled coil.

In Mus musculus (Mouse), this protein is Protein ITPRID1 (Itprid1).